The following is a 266-amino-acid chain: DNA repair protein RecO (266 aa).

It belongs to the RecO family.

In terms of biological role, involved in DNA repair and RecF pathway recombination. This chain is DNA repair protein RecO, found in Synechococcus elongatus (strain ATCC 33912 / PCC 7942 / FACHB-805) (Anacystis nidulans R2).